The sequence spans 1105 residues: SWI/SNF complex subunit SMARCC1 (1105 aa).

A2 is modified (N-acetylalanine). The tract at residues 28-302 is marR-like, BRCT and chromo domains module; the sequence is LAVYRRKDGG…PVSFRQRIST (275 aa). The MarR-like domain maps to 38–164; it reads PATKFWESPE…IEKTLVQNNC (127 aa). In terms of domain architecture, BRCT; N-terminus spans 168-211; sequence PNIYLIPDIDLKLANKLKDIIKRHQGTFTDEKSKASHHIYPYSS. K179 participates in a covalent cross-link: Glycyl lysine isopeptide (Lys-Gly) (interchain with G-Cter in SUMO2). Residues 217 to 245 enclose the Chromo domain; it reads EWLRPVMRKEKQVLVHWGFYPDSYDTWVH. The BRCT; C-terminus domain occupies 261-285; it reads KPWKVHVKWILDTDIFNEWMNEEDY. The segment at 296–439 is disordered; the sequence is FRQRISTKNE…DQSRSVDLGE (144 aa). The segment covering 302–318 has biased composition (basic and acidic residues); the sequence is TKNEEPVRSPERRDRKA. Phosphoserine occurs at positions 310, 328, and 330. Position 335 is a phosphothreonine (T335). 2 positions are modified to N6-acetyllysine: K345 and K346. Residue S350 is modified to Phosphoserine. The residue at position 354 (K354) is an N6-acetyllysine. Residue S357 is modified to Phosphoserine. K359 is modified (N6-acetyllysine; alternate). A Glycyl lysine isopeptide (Lys-Gly) (interchain with G-Cter in SUMO2); alternate cross-link involves residue K359. T398 carries the post-translational modification Phosphothreonine. Residues 449–546 form the SWIRM domain; sequence IIIPSYASWF…YQVDPESRPM (98 aa). Phosphoserine is present on S573. A Glycyl lysine isopeptide (Lys-Gly) (interchain with G-Cter in SUMO2) cross-link involves residue K592. Residues 618 to 669 form the SANT domain; that stretch reads SAGREWTEQETLLLLEALEMYKDDWNKVSEHVGSRTQDECILHFLRLPIEDP. Residue K739 forms a Glycyl lysine isopeptide (Lys-Gly) (interchain with G-Cter in SUMO2) linkage. Residues 745–860 are disordered; the sequence is ARASGKVDPT…DTGKKKVEHE (116 aa). The span at 776–785 shows a compositional bias: acidic residues; it reads AEEEKMEADP. Residues 789 to 860 show a composition bias toward basic and acidic residues; sequence QPEKAENKVE…DTGKKKVEHE (72 aa). K796 is covalently cross-linked (Glycyl lysine isopeptide (Lys-Gly) (interchain with G-Cter in SUMO2)). S822 and S825 each carry phosphoserine. Residues K829 and K856 each participate in a glycyl lysine isopeptide (Lys-Gly) (interchain with G-Cter in SUMO2) cross-link. Residues 914–946 adopt a coiled-coil conformation; sequence FEELETIMDREKEALEQQRQQLLTERQNFHMEQ. K948 carries the N6-acetyllysine modification. 2 disordered regions span residues 956–1028 and 1041–1105; these read QQME…PGQH and IHPS…SAAP. Over residues 957–993 the composition is skewed to low complexity; sequence QMEQQQHGQNPQQAHQHSGGPGLAPLGAAGHPGMMPH. 2 stretches are compositionally biased toward pro residues: residues 994 to 1017 and 1048 to 1057; these read QQPP…PGQI and PTPPGMPPMP. R1064 is modified (asymmetric dimethylarginine). A compositionally biased stretch (pro residues) spans 1073–1105; sequence MYPPPPQQQPPPPPPADGVPPPPAPGPPASAAP.

The protein belongs to the SMARCC family. As to quaternary structure, component of the multiprotein chromatin-remodeling complexes SWI/SNF: SWI/SNF-A (BAF), SWI/SNF-B (PBAF) and related complexes. The canonical complex contains a catalytic subunit (either SMARCA4/BRG1/BAF190A or SMARCA2/BRM/BAF190B) and at least SMARCE1, ACTL6A/BAF53, SMARCC1/BAF155, SMARCC2/BAF170, and SMARCB1/SNF5/BAF47. Other subunits specific to each of the complexes may also be present permitting several possible combinations developmentally and tissue specific. Component of the BAF complex, which includes at least actin (ACTB), ARID1A/BAF250A, ARID1B/BAF250B, SMARCA2/BRM, SMARCA4/BRG1, ACTL6A/BAF53, ACTL6B/BAF53B, SMARCE1/BAF57, SMARCC1/BAF155, SMARCC2/BAF170, SMARCB1/SNF5/INI1, and one or more SMARCD1/BAF60A, SMARCD2/BAF60B, or SMARCD3/BAF60C. In muscle cells, the BAF complex also contains DPF3. Component of neural progenitors-specific chromatin remodeling complex (npBAF complex) composed of at least, ARID1A/BAF250A or ARID1B/BAF250B, SMARCD1/BAF60A, SMARCD3/BAF60C, SMARCA2/BRM/BAF190B, SMARCA4/BRG1/BAF190A, SMARCB1/BAF47, SMARCC1/BAF155, SMARCE1/BAF57, SMARCC2/BAF170, PHF10/BAF45A, ACTL6A/BAF53A and actin. Component of neuron-specific chromatin remodeling complex (nBAF complex) composed of at least, ARID1A/BAF250A or ARID1B/BAF250B, SMARCD1/BAF60A, SMARCD3/BAF60C, SMARCA2/BRM/BAF190B, SMARCA4/BRG1/BAF190A, SMARCB1/BAF47, SMARCC1/BAF155, SMARCE1/BAF57, SMARCC2/BAF170, DPF1/BAF45B, DPF3/BAF45C, ACTL6B/BAF53B and actin. Component of the SWI/SNF-B (PBAF) chromatin remodeling complex, at least composed of SMARCA4/BRG1, SMARCB1/BAF47/SNF5, ACTL6A/BAF53A or ACTL6B/BAF53B, SMARCE1/BAF57, SMARCD1/BAF60A, SMARCD2/BAF60B, perhaps SMARCD3/BAF60C, SMARCC1/BAF155, SMARCC2/BAF170, PBRM1/BAF180, ARID2/BAF200 and actin. Component of SWI/SNF (GBAF) subcomplex, which includes at least BICRA or BICRAL (mutually exclusive), BRD9, SS18, SMARCA2/BRM, SMARCA4/BRG1/BAF190A, ACTL6A/BAF53, SMARCC1/BAF155, and SMARCD1/BAF60A. May also interact with the SIN3A histone deacetylase transcription repressor complex in conjunction with SMARCA2 and SMARCA4. The minimal complex composed of SMARCC1 and SMARCA4 seems to be able to associate with cyclin such as CCNE1 or transcription factors such as KLF1 or GATA1. Interacts with NR3C1 and SMARD1. Interacts with TRIP12; leading to disrupt interaction between TRIP12 and SMARCE1 and prevent SMARCE1 ubiquitination. Interacts with CEBPB (when not methylated). Interacts with KDM6B. Interacts with MKKS; the interaction takes place predominantly in the cytoplasm and may modulate SMARCC1 location. Interacts with DPF2. Interacts with PRDM1/BLIMP1. Interacts with DPF3a (isoform 2 of DPF3/BAF45C) and with HDGFL2 in a DPF3a-dependent manner. Post-translationally, phosphorylated on undefined residues at the G2/M transition by ERK1 and other kinases. This may contribute to cell cycle specific inactivation of remodeling complexes containing the phosphorylated protein. Expressed in brain, heart, muscle, placenta, lung, liver, muscle, kidney and pancreas.

It is found in the nucleus. Its subcellular location is the cytoplasm. Functionally, involved in transcriptional activation and repression of select genes by chromatin remodeling (alteration of DNA-nucleosome topology). Component of SWI/SNF chromatin remodeling complexes that carry out key enzymatic activities, changing chromatin structure by altering DNA-histone contacts within a nucleosome in an ATP-dependent manner. May stimulate the ATPase activity of the catalytic subunit of the complex. Belongs to the neural progenitors-specific chromatin remodeling complex (npBAF complex) and the neuron-specific chromatin remodeling complex (nBAF complex). During neural development a switch from a stem/progenitor to a postmitotic chromatin remodeling mechanism occurs as neurons exit the cell cycle and become committed to their adult state. The transition from proliferating neural stem/progenitor cells to postmitotic neurons requires a switch in subunit composition of the npBAF and nBAF complexes. As neural progenitors exit mitosis and differentiate into neurons, npBAF complexes which contain ACTL6A/BAF53A and PHF10/BAF45A, are exchanged for homologous alternative ACTL6B/BAF53B and DPF1/BAF45B or DPF3/BAF45C subunits in neuron-specific complexes (nBAF). The npBAF complex is essential for the self-renewal/proliferative capacity of the multipotent neural stem cells. The nBAF complex along with CREST plays a role regulating the activity of genes essential for dendrite growth. This chain is SWI/SNF complex subunit SMARCC1, found in Homo sapiens (Human).